We begin with the raw amino-acid sequence, 781 residues long: Protein argonaute (781 aa).

Positions serine 110–methionine 194 constitute a PAZ domain. One can recognise a Piwi domain in the interval leucine 436–arginine 760.

The protein belongs to the argonaute family. Ago subfamily. Interacts with miR2. Highly specific binding to the mRNA m7G-cap. May be a component of the RNA-induced silencing complex (RISC), a sequence-specific, multicomponent nuclease that destroys or silences messenger RNAs homologous to the silencing trigger.

It is found in the cytoplasm. Its function is as follows. Plays an essential role in growth and, with Dicer, also involved in microRNA (miRNA)-mediated translational repression. The RNA interference pathway is implicated in antigenic variation having a role in regulation of variant-specific surface protein (VSP)-coding gene expression. Several VSP genes are transcribed but only transcripts encoding the VSP to be expressed accumulate. Antisense RNAs corresponding to the silenced VSP genes are detected. The polypeptide is Protein argonaute (Giardia intestinalis (Giardia lamblia)).